Reading from the N-terminus, the 71-residue chain is Serine palmitoyltransferase small subunit A (71 aa).

Residues 1–12 (MAGMALARAWKQ) lie on the Cytoplasmic side of the membrane. The helical transmembrane segment at 13 to 29 (MSWFYYQYLLVTALYML) threads the bilayer. Over 30–34 (EPWER) the chain is Lumenal. Residues 35–57 (TVFNSMLVSIVGMALYTGYVFMP) form a helical membrane-spanning segment. Over 58–71 (QHIMAILHYFEIVQ) the chain is Cytoplasmic.

It belongs to the SPTSS family. SPTSSA subfamily. In terms of assembly, component of the serine palmitoyltransferase (SPT) complex, which is composed of SPTLC1, SPTLC2 or SPTLC3 and SPTSSA or SPTSSB. The heterodimer consisting of SPTLC1 and SPTLC2/SPTLC3 forms the catalytic core of the enzyme, while SPTSSA or SPTSSB subunits determine substrate specificity. SPT also interacts with ORMDL proteins, especially ORMDL3, which negatively regulate SPT activity in the presence of ceramides. Interacts with MBOAT7; the interaction plays a role in MBOAT7 localization to mitochondria-associated membranes.

The protein resides in the endoplasmic reticulum membrane. It functions in the pathway lipid metabolism; sphingolipid metabolism. Its function is as follows. Component of the serine palmitoyltransferase multisubunit enzyme (SPT) that catalyzes the initial and rate-limiting step in sphingolipid biosynthesis by condensing L-serine and activated acyl-CoA (most commonly palmitoyl-CoA) to form long-chain bases. The SPT complex is composed of SPTLC1, SPTLC2 or SPTLC3 and SPTSSA or SPTSSB. Within this complex, the heterodimer consisting of SPTLC1 and SPTLC2/SPTLC3 forms the catalytic core. Within the SPT complex, SPTSSA stimulates the catalytic activity and plays a role in substrate specificity, which depends upon the overall complex composition. The SPTLC1-SPTLC2-SPTSSA complex shows a strong preference for C16-CoA substrate, while the SPTLC1-SPTLC3-SPTSSA isozyme uses both C14-CoA and C16-CoA as substrates, with a slight preference for C14-CoA. Independently of its action as a SPT component, may be involved in MBOAT7 localization to mitochondria-associated membranes, a membrane bridge between the endoplasmic reticulum and mitochondria, may hence affect MBOAT7-catalyzed incorporation of arachidonic acid into phosphatidylinositol. In Homo sapiens (Human), this protein is Serine palmitoyltransferase small subunit A.